Consider the following 512-residue polypeptide: 2,3-bisphosphoglycerate-independent phosphoglycerate mutase (512 aa).

The Mn(2+) site is built by Asp-12 and Ser-62. The Phosphoserine intermediate role is filled by Ser-62. Substrate-binding positions include His-123, 154–155, Arg-181, Arg-187, 253–256, and Lys-336; these read RD and RPDR. Mn(2+) is bound by residues Asp-403, His-407, Asp-444, His-445, and His-462.

The protein belongs to the BPG-independent phosphoglycerate mutase family. Monomer. The cofactor is Mn(2+).

The enzyme catalyses (2R)-2-phosphoglycerate = (2R)-3-phosphoglycerate. The protein operates within carbohydrate degradation; glycolysis; pyruvate from D-glyceraldehyde 3-phosphate: step 3/5. Functionally, catalyzes the interconversion of 2-phosphoglycerate and 3-phosphoglycerate. The chain is 2,3-bisphosphoglycerate-independent phosphoglycerate mutase from Onion yellows phytoplasma (strain OY-M).